We begin with the raw amino-acid sequence, 739 residues long: Catalase-peroxidase (739 aa).

Positions 1 to 20 (MGSNECPYSRQNANIGGGGQ) are disordered. Residues 94–217 (WHSAGTYRVF…LAASHMGLIY (124 aa)) constitute a cross-link (tryptophyl-tyrosyl-methioninium (Trp-Tyr) (with M-243)). His95 serves as the catalytic Proton acceptor. Residues 217-243 (YVNPEGPNKNPDPVLAAKDIRITFGRM) constitute a cross-link (tryptophyl-tyrosyl-methioninium (Tyr-Met) (with W-94)). A heme b-binding site is contributed by His258.

This sequence belongs to the peroxidase family. Peroxidase/catalase subfamily. Homodimer or homotetramer. It depends on heme b as a cofactor. Post-translationally, formation of the three residue Trp-Tyr-Met cross-link is important for the catalase, but not the peroxidase activity of the enzyme.

It localises to the cytoplasm. The catalysed reaction is H2O2 + AH2 = A + 2 H2O. It carries out the reaction 2 H2O2 = O2 + 2 H2O. Functionally, bifunctional enzyme with both catalase and broad-spectrum peroxidase activity. The sequence is that of Catalase-peroxidase from Emericella nidulans (strain FGSC A4 / ATCC 38163 / CBS 112.46 / NRRL 194 / M139) (Aspergillus nidulans).